The chain runs to 249 residues: MVEMNFKVEAFEGPLDLLLHLIGQLEVDIYDIPMAEITDQYMEFVHTMQEMELDVASEYLVMAATLLAIKSKMLLPKQELEIDYDTLEEEEDPRDALVEKLMEYKRFKEAAKELKEKEAERSFYFSKPPMDLAEYDEGTKVAELDVSLNDMLSAFNKMLRRKKLNKPLHTRITTQEISIDDRMNSVLGKLHQQTNHRLRFDELFEEQTKEQLVVTFLALLELMKRKLVEVEQSASFADLYVQGKGEELS.

It belongs to the ScpA family. Component of a cohesin-like complex composed of ScpA, ScpB and the Smc homodimer, in which ScpA and ScpB bind to the head domain of Smc. The presence of the three proteins is required for the association of the complex with DNA.

The protein localises to the cytoplasm. In terms of biological role, participates in chromosomal partition during cell division. May act via the formation of a condensin-like complex containing Smc and ScpB that pull DNA away from mid-cell into both cell halves. In Listeria innocua serovar 6a (strain ATCC BAA-680 / CLIP 11262), this protein is Segregation and condensation protein A.